The primary structure comprises 608 residues: MAESIIIRVQSPDGVKRITATKRETAATFLKKVAKEFGFQNNGFSVYINRNKTGEITASSNKSLNLLKIKHGDLLFLFPSSLAGPSSEMETSVPPGFKVFGAPNVVEDEIDQYLSKQDGKIYRSRDPQLCRHGPLGKCVHCVPLEPFDEDYLNHLEPPVKHMSFHAYIRKLTGGADKGKFVALENISCKIKSGCEGHLPWPNGICTKCQPSAITLNRQKYRHVDNIMFENHTVADRFLDFWRKTGNQHFGYLYGRYTEHKDIPLGIRAEVAAIYEPPQIGTQNSLELLEDPKAEVVDEIAAKLGLRKVGWIFTDLVSEDTRKGTVRYSRNKDTYFLSSEECITAGDFQNKHPNMCRLSPDGHFGSKFVTAVATGGPDNQVHFEGYQVSNQCMALVRDECLLPCKDAPELGYAKESSSEQYVPDVFYKDVDKFGNEITQLARPLPVEYLIIDITTTFPKDPVYTFSISQNPFPIENRDVLGETQDFHSLATYLSQNTSSVFLDTISDFHLLLFLVTNEVMPLQDSISLLLEAVRTRNEELAQTWKRSEQWATIEQLCSTVGGQLPGLHEYGAVGGSTHTATAAMWACQHCTFMNQPGTGHCEMCSLPRT.

A2 bears the N-acetylalanine mark. K179 is modified (N6-acetyllysine). The MPN domain maps to 226 to 363 (IMFENHTVAD…MCRLSPDGHF (138 aa)). The segment at 580-608 (TAAMWACQHCTFMNQPGTGHCEMCSLPRT) adopts a RanBP2-type zinc-finger fold.

Belongs to the NPL4 family. Heterodimer with UFD1. The heterodimer binds ubiquitinated proteins. The heterodimer binds to VCP and inhibits Golgi membrane fusion. Interacts with ZFAND2B; probably through VCP. Expressed at highest levels in brain, heart, skeletal muscle, kidney and fetal liver.

It localises to the cytoplasm. The protein resides in the cytosol. It is found in the endoplasmic reticulum. Its subcellular location is the nucleus. Its pathway is protein degradation; proteasomal ubiquitin-dependent pathway. The ternary complex containing UFD1, VCP and NPLOC4 binds ubiquitinated proteins and is necessary for the export of misfolded proteins from the ER to the cytoplasm, where they are degraded by the proteasome. The NPLOC4-UFD1-VCP complex regulates spindle disassembly at the end of mitosis and is necessary for the formation of a closed nuclear envelope. Acts as a negative regulator of type I interferon production via the complex formed with VCP and UFD1, which binds to RIGI and recruits RNF125 to promote ubiquitination and degradation of RIGI. This chain is Nuclear protein localization protein 4 homolog (NPLOC4), found in Homo sapiens (Human).